The sequence spans 158 residues: Male-specific protein scotti (158 aa).

The tract at residues 24–43 (NVPDGNGDGDGDGDGDGNDA) is disordered. Over residues 30-42 (GDGDGDGDGDGND) the composition is skewed to acidic residues.

Belongs to the male-specific scotti family.

Post-meiotically transcribed gene that has a role in late spermiogenesis; required for actin cone progression during spermatid individualization. The sequence is that of Male-specific protein scotti from Drosophila virilis (Fruit fly).